A 60-amino-acid polypeptide reads, in one-letter code: Large ribosomal subunit protein bL32 (60 aa).

Over residues 1-19 (MAVPKRKKSKSRRNMHRSH) the composition is skewed to basic residues. The tract at residues 1-24 (MAVPKRKKSKSRRNMHRSHHAIEP) is disordered.

The protein belongs to the bacterial ribosomal protein bL32 family.

The polypeptide is Large ribosomal subunit protein bL32 (Wolbachia pipientis wMel).